The following is a 616-amino-acid chain: Adenylosuccinate synthetase 2 (616 aa).

Residues 1–26 form a disordered region; sequence MDKQAERDQSAGPVKTPQETQPPAHN. Over residues 17 to 26 the composition is skewed to polar residues; that stretch reads PQETQPPAHN. GTP-binding positions include 87 to 93 and 117 to 119; these read GDEGKGK and GHT. The active-site Proton acceptor is aspartate 88. Mg(2+)-binding residues include aspartate 88 and glycine 117. IMP is bound by residues 88–91, 115–118, threonine 202, lysine 216, glutamine 328, threonine 343, and lysine 472; these read DEGK and NAGH. The active-site Proton donor is histidine 118. 468–474 contacts substrate; the sequence is AVTKKPR. GTP is bound by residues arginine 474 and 603 to 605; that span reads GNG.

It belongs to the adenylosuccinate synthetase family. In terms of assembly, homodimer. Mg(2+) serves as cofactor.

It localises to the cytoplasm. It carries out the reaction IMP + L-aspartate + GTP = N(6)-(1,2-dicarboxyethyl)-AMP + GDP + phosphate + 2 H(+). Its pathway is purine metabolism; AMP biosynthesis via de novo pathway; AMP from IMP: step 1/2. Its function is as follows. Plays an important role in the salvage pathway for purine nucleotide biosynthesis. Catalyzes the first committed step in the biosynthesis of AMP from IMP. The sequence is that of Adenylosuccinate synthetase 2 from Trypanosoma cruzi (strain CL Brener).